Consider the following 140-residue polypeptide: Organic hydroperoxide resistance protein-like 1 (140 aa).

It belongs to the OsmC/Ohr family.

The protein is Organic hydroperoxide resistance protein-like 1 of Staphylococcus epidermidis (strain ATCC 35984 / DSM 28319 / BCRC 17069 / CCUG 31568 / BM 3577 / RP62A).